A 1179-amino-acid polypeptide reads, in one-letter code: ATP-dependent helicase/deoxyribonuclease subunit B (1179 aa).

This sequence belongs to the helicase family. AddB/RexB type 2 subfamily. Heterodimer of AddA and RexB. Requires Mg(2+) as cofactor.

Its function is as follows. The heterodimer acts as both an ATP-dependent DNA helicase and an ATP-dependent, dual-direction single-stranded exonuclease. Recognizes the chi site generating a DNA molecule suitable for the initiation of homologous recombination. This subunit has 5' -&gt; 3' nuclease activity but not helicase activity. The polypeptide is ATP-dependent helicase/deoxyribonuclease subunit B (Lacticaseibacillus casei (strain BL23) (Lactobacillus casei)).